A 237-amino-acid polypeptide reads, in one-letter code: Ras-related protein Rab-23 (237 aa).

Ala19 serves as a coordination point for GDP. 5 residues coordinate GTP: Val20, Gly21, Lys22, Ser23, and Ser24. 5 residues coordinate GDP: Gly21, Lys22, Ser23, Ser24, and Asp37. Ser23 contacts Mg(2+). A Switch 1 motif is present at residues 28–46 (RYCKGIFTKDYKKTIGVDF). Residue Tyr38 participates in GTP binding. Residue Lys40 coordinates GDP. Thr41 contributes to the GTP binding site. 2 residues coordinate Mg(2+): Thr41 and Asp64. The Switch 2 signature appears at 65–84 (TAGQEEFDAITKAYYRGAQA). Residues Gly67, Asn121, Lys122, Asp124, Ser151, Val152, and Lys153 each contribute to the GTP site. 3 residues coordinate GDP: Asn121, Lys122, and Asp124. GDP-binding residues include Val152 and Lys153. Ser186 and Ser187 each carry phosphoserine. The tract at residues 204–237 (QNSSSLNGGDVINLRPNKQRTKRTRNPFSSCSVP) is disordered. Cysteine methyl ester is present on Cys234. Cys234 carries the S-geranylgeranyl cysteine lipid modification. The propeptide at 235-237 (SVP) is removed in mature form.

Belongs to the small GTPase superfamily. Rab family. Interacts with SUFU. Requires Mg(2+) as cofactor. In terms of tissue distribution, detected in brain neurons (at protein level). Forebrain and midbrain.

The protein resides in the cell membrane. Its subcellular location is the cytoplasm. It localises to the endosome membrane. It is found in the cytoplasmic vesicle. The protein localises to the autophagosome. The protein resides in the phagosome. Its subcellular location is the phagosome membrane. It carries out the reaction GTP + H2O = GDP + phosphate + H(+). Its activity is regulated as follows. Regulated by guanine nucleotide exchange factors (GEFs) which promote the exchange of bound GDP for free GTP. Regulated by GTPase activating proteins (GAPs) which increase the GTP hydrolysis activity. Inhibited by GDP dissociation inhibitors (GDIs). The small GTPases Rab are key regulators of intracellular membrane trafficking, from the formation of transport vesicles to their fusion with membranes. Rabs cycle between an inactive GDP-bound form and an active GTP-bound form that is able to recruit to membranes different set of downstream effectors directly responsible for vesicle formation, movement, tethering and fusion. Plays a role in autophagic vacuole assembly, and mediates defense against pathogens, such as S.aureus, by promoting their capture by autophagosomes that then merge with lysosomes. Together with SUFU, prevents nuclear import of GLI1, and thereby inhibits GLI1 transcription factor activity. Regulates GLI1 in differentiating chondrocytes. Likewise, regulates GLI3 proteolytic processing and modulates GLI2 and GLI3 transcription factor activity. The chain is Ras-related protein Rab-23 from Mus musculus (Mouse).